Here is a 360-residue protein sequence, read N- to C-terminus: Nucleoporin SEH1 (360 aa).

WD repeat units follow at residues 10-49, 55-96, 111-152, 160-210, 217-258, and 276-315; these read DHKD…DWHC, THSG…SNDK, DSRT…NLSQ, SCKL…RKYA, TVTD…KELT, and NHNS…NWKC. A Glycyl lysine isopeptide (Lys-Gly) (interchain with G-Cter in SUMO2) cross-link involves residue Lys12. Phosphoserine is present on residues Ser179 and Ser190. Residues 324–354 show a composition bias toward polar residues; it reads SPVNGSSQQGTSNPSLGSNIPSLQNSLNGSS. The segment at 324 to 360 is disordered; the sequence is SPVNGSSQQGTSNPSLGSNIPSLQNSLNGSSAGRKHS.

Belongs to the WD repeat SEC13 family. Component of the Nup107-160 subcomplex of the nuclear pore complex (NPC). The Nup107-160 subcomplex includes NUP160, NUP133, NUP107, NUP98, NUP85, NUP43, NUP37, SEH1 and SEC13. The SEH1 subunit appears to be only weakly associated with the Nup107-160 subcomplex. Component of the GATOR2 subcomplex, composed of MIOS, SEC13, SEH1L, WDR24 and WDR59. The GATOR2 complex interacts with CASTOR1 and CASTOR2; the interaction is negatively regulated by arginine. The GATOR2 complex interacts with SESN1, SESN2 and SESN3; the interaction is negatively regulated by amino acids. SESN1, SESN2 and SESN3 convey leucine availability via direct interaction with SEH1L and WDR24.

It localises to the chromosome. The protein resides in the centromere. The protein localises to the kinetochore. It is found in the nucleus. Its subcellular location is the nuclear pore complex. It localises to the lysosome membrane. The GATOR2 complex is negatively regulated by the upstream amino acid sensors CASTOR1 and SESN2, which sequester the GATOR2 complex in absence of amino acids. In the presence of abundant amino acids, GATOR2 is released from CASTOR1 and SESN2 and activated. Functionally, component of the Nup107-160 subcomplex of the nuclear pore complex (NPC). The Nup107-160 subcomplex is required for the assembly of a functional NPC. The Nup107-160 subcomplex is also required for normal kinetochore microtubule attachment, mitotic progression and chromosome segregation. This subunit plays a role in recruitment of the Nup107-160 subcomplex to the kinetochore. Its function is as follows. As a component of the GATOR2 complex, functions as an activator of the amino acid-sensing branch of the mTORC1 signaling pathway. The GATOR2 complex indirectly activates mTORC1 through the inhibition of the GATOR1 subcomplex. GATOR2 probably acts as an E3 ubiquitin-protein ligase toward GATOR1. In the presence of abundant amino acids, the GATOR2 complex mediates ubiquitination of the NPRL2 core component of the GATOR1 complex, leading to GATOR1 inactivation. In the absence of amino acids, GATOR2 is inhibited, activating the GATOR1 complex. Within the GATOR2 complex, SEC13 and SEH1L are required to stabilize the complex. In Pongo abelii (Sumatran orangutan), this protein is Nucleoporin SEH1 (SEH1L).